The sequence spans 478 residues: tRNA(Ile)-lysidine synthase (478 aa).

Position 27 to 32 (27 to 32 (SGGSDS)) interacts with ATP.

The protein belongs to the tRNA(Ile)-lysidine synthase family.

It localises to the cytoplasm. It catalyses the reaction cytidine(34) in tRNA(Ile2) + L-lysine + ATP = lysidine(34) in tRNA(Ile2) + AMP + diphosphate + H(+). In terms of biological role, ligates lysine onto the cytidine present at position 34 of the AUA codon-specific tRNA(Ile) that contains the anticodon CAU, in an ATP-dependent manner. Cytidine is converted to lysidine, thus changing the amino acid specificity of the tRNA from methionine to isoleucine. The polypeptide is tRNA(Ile)-lysidine synthase (Rickettsia rickettsii (strain Iowa)).